We begin with the raw amino-acid sequence, 540 residues long: H(+)/hexose cotransporter 2 (540 aa).

Topologically, residues 1–29 are cytoplasmic; the sequence is MAGGGPVASTTTNRASQYGYARGGLNWYI. A helical transmembrane segment spans residues 30 to 50; the sequence is FIVALTAGSGGLLFGYDIGVT. Residues 51-90 are Extracellular-facing; sequence GGVTSMPEFLQKFFPSIYDRTQQPSDSKDPYCTYDDQKLQ. Residues 91–111 form a helical membrane-spanning segment; the sequence is LFTSSFFLAGMFVSFFAGSVV. The Cytoplasmic portion of the chain corresponds to 112 to 124; it reads RRWGRKPTMLIAS. The helical transmembrane segment at 125–135 threads the bilayer; sequence VLFLAGAGLNA. The Extracellular segment spans residues 136–147; sequence GAQDLAMLVIGR. The helical transmembrane segment at 148-168 threads the bilayer; the sequence is VLLGFGVGGGNNAVPLYLSEC. The Cytoplasmic portion of the chain corresponds to 169–176; that stretch reads APPKYRGG. Residues 177 to 197 form a helical membrane-spanning segment; that stretch reads LNMMFQLAVTIGIIVAQLVNY. At 198–207 the chain is on the extracellular side; sequence GTQTMNNGWR. The helical transmembrane segment at 208–228 threads the bilayer; the sequence is LSLGLAGVPAIILLIGSLLLP. Topologically, residues 229 to 296 are cytoplasmic; sequence ETPNSLIERG…YSPMLIVTSL (68 aa). Residues 297-317 traverse the membrane as a helical segment; that stretch reads IAMLQQLTGINAIMFYVPVLF. The Extracellular segment spans residues 318-326; the sequence is SSFGTARHA. Residues 327–337 traverse the membrane as a helical segment; that stretch reads ALLNTVIIGAV. Residues 338 to 355 are Cytoplasmic-facing; it reads NVAATFVSIFSVDKFGRR. Residues 356-376 traverse the membrane as a helical segment; that stretch reads GLFLEGGIQMFIGQVVTAAVL. Over 377–396 the chain is Extracellular; that stretch reads GVELNKYGTNLPSSTAAGVL. The helical transmembrane segment at 397–417 threads the bilayer; sequence VVICVYVAAFAWSWGPLGWLV. Residues 418-435 are Cytoplasmic-facing; that stretch reads PSEIQTLETRGAGMSMAV. The chain crosses the membrane as a helical span at residues 436-456; that stretch reads IVNFLFSFVIGQAFLSMMCAM. Topologically, residues 457 to 458 are extracellular; the sequence is RW. A helical transmembrane segment spans residues 459–479; that stretch reads GVFLFFAGWVVIMTFFVYFCL. Over 480-540 the chain is Cytoplasmic; sequence PETKGVPVET…SEDGKPASDQ (61 aa).

Belongs to the major facilitator superfamily. Sugar transporter (TC 2.A.1.1) family.

Its subcellular location is the membrane. Functionally, active uptake of galactose. This Parachlorella kessleri (Green alga) protein is H(+)/hexose cotransporter 2 (HUP2).